The primary structure comprises 375 residues: Trichodiene synthase (375 aa).

This sequence belongs to the trichodiene synthase family.

It carries out the reaction (2E,6E)-farnesyl diphosphate = trichodiene + diphosphate. It participates in sesquiterpene biosynthesis; trichothecene biosynthesis. Functionally, TS is a member of the terpene cyclase group of enzymes. It catalyzes the isomerization and cyclization of farnesyl pyro-phosphate to form trichodiene, the first cyclic intermediate in the biosynthetic pathway for trichothecenes. It serves to branch trichothecene biosynthesis from the isoprenoid pathway. The polypeptide is Trichodiene synthase (TRI5) (Fusarium asiaticum).